Here is a 194-residue protein sequence, read N- to C-terminus: Cell division protein SepF (194 aa).

2 disordered regions span residues D35 to P54 and S159 to L194.

This sequence belongs to the SepF family. As to quaternary structure, homodimer. Interacts with FtsZ.

The protein resides in the cytoplasm. Cell division protein that is part of the divisome complex and is recruited early to the Z-ring. Probably stimulates Z-ring formation, perhaps through the cross-linking of FtsZ protofilaments. Its function overlaps with FtsA. The chain is Cell division protein SepF from Prochlorococcus marinus (strain MIT 9313).